The primary structure comprises 282 residues: uncharacterized protein (282 aa).

The HTH rpiR-type domain occupies 4 to 80 (STLTSKLESL…VDYLSDEKQY (77 aa)). The segment at residues 40–59 (VAELAQAAGVSSASVIRFTR) is a DNA-binding region (H-T-H motif). The SIS domain occupies 125 to 265 (IAQKIVEAKR…FFKYLTLTNE (141 aa)).

This is an uncharacterized protein from Providencia stuartii.